The following is a 309-amino-acid chain: PI-PLC X domain-containing protein 1 (309 aa).

Positions 17–193 (HMWDIPLWNL…QVILSYDDES (177 aa)) constitute a PI-PLC X-box domain.

This is PI-PLC X domain-containing protein 1 (plcxd1) from Danio rerio (Zebrafish).